The primary structure comprises 361 residues: tRNA 2-selenouridine synthase (361 aa).

Residues 11–134 (ALLERPLIDV…MRQCVNAEIE (124 aa)) enclose the Rhodanese domain. Cys-94 serves as the catalytic S-selanylcysteine intermediate.

The protein belongs to the SelU family. In terms of assembly, monomer.

The enzyme catalyses 5-methylaminomethyl-2-thiouridine(34) in tRNA + selenophosphate + (2E)-geranyl diphosphate + H2O + H(+) = 5-methylaminomethyl-2-selenouridine(34) in tRNA + (2E)-thiogeraniol + phosphate + diphosphate. The catalysed reaction is 5-methylaminomethyl-2-thiouridine(34) in tRNA + (2E)-geranyl diphosphate = 5-methylaminomethyl-S-(2E)-geranyl-thiouridine(34) in tRNA + diphosphate. It carries out the reaction 5-methylaminomethyl-S-(2E)-geranyl-thiouridine(34) in tRNA + selenophosphate + H(+) = 5-methylaminomethyl-2-(Se-phospho)selenouridine(34) in tRNA + (2E)-thiogeraniol. It catalyses the reaction 5-methylaminomethyl-2-(Se-phospho)selenouridine(34) in tRNA + H2O = 5-methylaminomethyl-2-selenouridine(34) in tRNA + phosphate. Functionally, involved in the post-transcriptional modification of the uridine at the wobble position (U34) of tRNA(Lys), tRNA(Glu) and tRNA(Gln). Catalyzes the conversion of 2-thiouridine (S2U-RNA) to 2-selenouridine (Se2U-RNA). Acts in a two-step process involving geranylation of 2-thiouridine (S2U) to S-geranyl-2-thiouridine (geS2U) and subsequent selenation of the latter derivative to 2-selenouridine (Se2U) in the tRNA chain. This chain is tRNA 2-selenouridine synthase, found in Chromohalobacter salexigens (strain ATCC BAA-138 / DSM 3043 / CIP 106854 / NCIMB 13768 / 1H11).